The primary structure comprises 88 residues: EMBRYO SURROUNDING FACTOR 1-like protein 7 (88 aa).

The N-terminal stretch at Met1–Ser22 is a signal peptide. Cystine bridges form between Cys41–Cys57, Cys46–Cys85, Cys55–Cys81, and Cys58–Cys68.

This sequence belongs to the MEG family. As to expression, expressed in leaves and flowers.

In Arabidopsis thaliana (Mouse-ear cress), this protein is EMBRYO SURROUNDING FACTOR 1-like protein 7 (ESFL7).